The sequence spans 121 residues: MNKPQTIYEKLGGENAMKAAVPLFYKKVLADERVKHFFKNTDMDHQTKQQTDFLTMLLGGPNHYKGKNMTEAHKGMNLQNLHFDAIIENLAATLKELGVTDAVINEAAKVIEHTRKDMLGK.

At Met-1 the chain carries N-acetylmethionine. His-73 is a heme binding site.

This sequence belongs to the truncated hemoglobin family. Group I subfamily. Monomer. The cofactor is heme.

This Tetrahymena pyriformis protein is Group 1 truncated hemoglobin.